The sequence spans 193 residues: Inner membrane-spanning protein YciB (193 aa).

6 consecutive transmembrane segments (helical) span residues 5 to 25 (TLDA…FYIY), 36 to 56 (IIAA…LMFV), 67 to 87 (WLVV…QDDF), 93 to 113 (APII…FLGG), 138 to 158 (VWVG…FVWV), and 164 to 184 (FTAF…FWFL).

This sequence belongs to the YciB family.

Its subcellular location is the cell inner membrane. Plays a role in cell envelope biogenesis, maintenance of cell envelope integrity and membrane homeostasis. In Vitreoscilla sp. (strain C1), this protein is Inner membrane-spanning protein YciB.